Reading from the N-terminus, the 187-residue chain is Crossover junction endodeoxyribonuclease RuvC (187 aa).

Residues aspartate 7, glutamate 67, and aspartate 140 contribute to the active site. Aspartate 7, glutamate 67, and aspartate 140 together coordinate Mg(2+).

The protein belongs to the RuvC family. As to quaternary structure, homodimer which binds Holliday junction (HJ) DNA. The HJ becomes 2-fold symmetrical on binding to RuvC with unstacked arms; it has a different conformation from HJ DNA in complex with RuvA. In the full resolvosome a probable DNA-RuvA(4)-RuvB(12)-RuvC(2) complex forms which resolves the HJ. Mg(2+) serves as cofactor.

Its subcellular location is the cytoplasm. The enzyme catalyses Endonucleolytic cleavage at a junction such as a reciprocal single-stranded crossover between two homologous DNA duplexes (Holliday junction).. Its function is as follows. The RuvA-RuvB-RuvC complex processes Holliday junction (HJ) DNA during genetic recombination and DNA repair. Endonuclease that resolves HJ intermediates. Cleaves cruciform DNA by making single-stranded nicks across the HJ at symmetrical positions within the homologous arms, yielding a 5'-phosphate and a 3'-hydroxyl group; requires a central core of homology in the junction. The consensus cleavage sequence is 5'-(A/T)TT(C/G)-3'. Cleavage occurs on the 3'-side of the TT dinucleotide at the point of strand exchange. HJ branch migration catalyzed by RuvA-RuvB allows RuvC to scan DNA until it finds its consensus sequence, where it cleaves and resolves the cruciform DNA. This chain is Crossover junction endodeoxyribonuclease RuvC, found in Chlorobaculum parvum (strain DSM 263 / NCIMB 8327) (Chlorobium vibrioforme subsp. thiosulfatophilum).